Reading from the N-terminus, the 239-residue chain is MTLYKLVVLGDGGVGKTALTIQLCLNHFVETYDPTIEDSYRKQVVIDQQSCMLEVLDTAGQEEYTALRDQWIRDGEGFVLVYSITSRASFTRIQKFYNQIKMVKESAHSGSPSGASYLGSPMNAPSGPPLPVPVMLVGNKSDKAVERAVSAQEGQALAKDLGCEFVEASAKNCINVEKAFYDVVRMLRQQRQQQQGGRAQDRRPTGLGPMRDRDAGPEYPKTFRPDRARHRGGIKCVIL.

GTP is bound by residues 13-18 (GVGKTA), 29-35 (VETYDPT), 59-60 (AG), 139-142 (NKSD), and 169-171 (SAK). Positions 32–40 (YDPTIEDSY) match the Effector region motif. Residues 191–227 (RQQQQGGRAQDRRPTGLGPMRDRDAGPEYPKTFRPDR) form a disordered region. The segment covering 199-226 (AQDRRPTGLGPMRDRDAGPEYPKTFRPD) has biased composition (basic and acidic residues).

Belongs to the small GTPase superfamily. Ras family. Interacts with mpkA.

The catalysed reaction is GTP + H2O = GDP + phosphate + H(+). Functionally, ras-like protein involved in the activation of Ras protein signal transduction. Ras proteins bind GDP/GTP and possess intrinsic GTPase activity. Plays a role in hyphal morphology and conidiophore development. Required for full virulence. The polypeptide is Ras-like protein B (Aspergillus fumigatus (strain ATCC MYA-4609 / CBS 101355 / FGSC A1100 / Af293) (Neosartorya fumigata)).